A 219-amino-acid polypeptide reads, in one-letter code: Multiple organellar RNA editing factor 2, chloroplastic (219 aa).

A chloroplast-targeting transit peptide spans 1–48; that stretch reads MALPLSGTRHLTRALLSNVTLMAPPRIPSSVHYGGSRLGCSTRFFSIR. A disordered region spans residues 182 to 219; sequence VQRSPERQRRVEPQPQRAQDRPRYNDRTRYSRRRENTR. Residues 185–219 show a composition bias toward basic and acidic residues; it reads SPERQRRVEPQPQRAQDRPRYNDRTRYSRRRENTR.

The protein belongs to the MORF family. In terms of assembly, homodimer and heterodimer with MORF9. Interacts with protoporphyrinogen oxidase 1 PPOX1. Heterodimers with MORF8/RIP1 and MORF9/RIP9. Interacts with PCMP-A2/PMD1. Interacts with ORRM1. Interacts with ORRM6.

It is found in the plastid. The protein resides in the chloroplast. In terms of biological role, involved in plastid rRNA processing and consequently in translation and early chloroplast differentiation. Involved in organellar RNA editing. Required for the processing of multiple editing sites in plastids. The sequence is that of Multiple organellar RNA editing factor 2, chloroplastic from Arabidopsis thaliana (Mouse-ear cress).